Here is a 142-residue protein sequence, read N- to C-terminus: Myosin-2 essential light chain (142 aa).

EF-hand domains follow at residues 2 to 37 (DDLA…LGQN) and 75 to 110 (HTVE…LGER).

In terms of assembly, myosin is a hexamer of 2 heavy chains and 4 light chains (two regulatory light chains and two essential light chains).

Its subcellular location is the cytoplasm. The protein resides in the cytoskeleton. Required for cytokinesis and embryo elongation. May regulate myosin II complex formation and/or the association of myosin with actin. May be involved in the organization of mlc-4 and nmy-2 into bundles. This Caenorhabditis elegans protein is Myosin-2 essential light chain.